Reading from the N-terminus, the 353-residue chain is Methionine import ATP-binding protein MetN (353 aa).

The ABC transporter domain maps to 11 to 251 (ITFDRVEKSF…PEHPTTRSFL (241 aa)). ATP is bound at residue 48–55 (GRSGAGKS).

Belongs to the ABC transporter superfamily. Methionine importer (TC 3.A.1.24) family. As to quaternary structure, the complex is composed of two ATP-binding proteins (MetN), two transmembrane proteins (MetI) and a solute-binding protein (MetQ).

The protein localises to the cell inner membrane. The catalysed reaction is L-methionine(out) + ATP + H2O = L-methionine(in) + ADP + phosphate + H(+). It catalyses the reaction D-methionine(out) + ATP + H2O = D-methionine(in) + ADP + phosphate + H(+). Part of the ABC transporter complex MetNIQ involved in methionine import. Responsible for energy coupling to the transport system. The chain is Methionine import ATP-binding protein MetN from Cereibacter sphaeroides (strain ATCC 17023 / DSM 158 / JCM 6121 / CCUG 31486 / LMG 2827 / NBRC 12203 / NCIMB 8253 / ATH 2.4.1.) (Rhodobacter sphaeroides).